The primary structure comprises 188 residues: MSVATGDKPVNSRQEILEGARRCFAEHGYEGATVRRLEEATGKSRGAIFHHFGDKEKLFLALAREDAARMAETVSENGLVEVMRGMLEDPERYDWLSIRLEISKQLRTDPEFRAKWTDHQSVLDEAVRVRLARNADKGRMRTDVPIEVLHLYLETVMDGFISRLATGASTEGLSEVLDLVETSVRRPD.

One can recognise an HTH tetR-type domain in the interval 10–70 (VNSRQEILEG…ALAREDAARM (61 aa)). Positions 33 to 52 (TVRRLEEATGKSRGAIFHHF) form a DNA-binding region, H-T-H motif. Citrate contacts are provided by residues 79–80 (LV), Arg-130, and Asn-134. A Mg(2+)-binding site is contributed by Glu-181. Arg-185 lines the citrate pocket.

As to quaternary structure, homodimer.

AcnR negatively controls the expression of the aconitase gene acn. In Corynebacterium efficiens (strain DSM 44549 / YS-314 / AJ 12310 / JCM 11189 / NBRC 100395), this protein is HTH-type transcriptional repressor AcnR.